Reading from the N-terminus, the 461-residue chain is Fumarate hydratase class II (461 aa).

Substrate is bound by residues 97–99 (SGT), 127–130 (HPND), 137–139 (SSN), and Thr-185. His-186 (proton donor/acceptor) is an active-site residue. Ser-316 is a catalytic residue. Substrate-binding positions include Ser-317 and 322–324 (KVN).

This sequence belongs to the class-II fumarase/aspartase family. Fumarase subfamily. In terms of assembly, homotetramer.

Its subcellular location is the cytoplasm. It carries out the reaction (S)-malate = fumarate + H2O. The protein operates within carbohydrate metabolism; tricarboxylic acid cycle; (S)-malate from fumarate: step 1/1. Involved in the TCA cycle. Catalyzes the stereospecific interconversion of fumarate to L-malate. The protein is Fumarate hydratase class II of Staphylococcus haemolyticus (strain JCSC1435).